The sequence spans 433 residues: Zinc finger and SCAN domain-containing protein 4 (433 aa).

The SCAN box domain occupies 44–126 (RMVLNSFQDS…RFMEDLTDDS (83 aa)). Composition is skewed to polar residues over residues 162–184 (SAQTPREANMGTPSQTSQDTSLE) and 277–298 (QPEQSSPESALTHQSNEGNSTC). 2 disordered regions span residues 162–199 (SAQTPREANMGTPSQTSQDTSLETGEGCEDEQDGCNSS) and 272–298 (AGCISQPEQSSPESALTHQSNEGNSTC). C2H2-type zinc fingers lie at residues 312-334 (YKCEECPKVFKYLCHLLAHQRRH), 340-362 (FVCPECQKGFFQISDLRVHQIIH), 368-390 (FTCSMCEKSFSHKTNLRSHERIH), and 396-418 (YTCPFCKTSYRQSSTYHRHMRTH). The interval 414–433 (HMRTHEKITPPSVPSTPEAS) is disordered.

Its subcellular location is the nucleus. It localises to the chromosome. It is found in the telomere. In terms of biological role, embryonic stem (ES) cell-specific transcription factor required to regulate ES cell pluripotency. Binds telomeres and plays a key role in genomic stability in ES cells by regulating telomere elongation. Acts as an activator of spontaneous telomere sister chromatid exchange (T-SCE) and telomere elongation in undifferentiated ES cells. This is Zinc finger and SCAN domain-containing protein 4 (ZSCAN4) from Pongo pygmaeus (Bornean orangutan).